The chain runs to 540 residues: Glucose-6-phosphate isomerase (540 aa).

E351 serves as the catalytic Proton donor. Residues H382 and K506 contribute to the active site.

The protein belongs to the GPI family.

Its subcellular location is the cytoplasm. The catalysed reaction is alpha-D-glucose 6-phosphate = beta-D-fructose 6-phosphate. It functions in the pathway carbohydrate biosynthesis; gluconeogenesis. It participates in carbohydrate degradation; glycolysis; D-glyceraldehyde 3-phosphate and glycerone phosphate from D-glucose: step 2/4. Catalyzes the reversible isomerization of glucose-6-phosphate to fructose-6-phosphate. This is Glucose-6-phosphate isomerase from Corynebacterium glutamicum (strain R).